A 407-amino-acid polypeptide reads, in one-letter code: Imidazolonepropionase (407 aa).

2 residues coordinate Fe(3+): His68 and His70. Zn(2+) contacts are provided by His68 and His70. The 4-imidazolone-5-propanoate site is built by Arg77, Tyr140, and His173. An N-formimidoyl-L-glutamate-binding site is contributed by Tyr140. His238 contributes to the Fe(3+) binding site. His238 is a binding site for Zn(2+). 4-imidazolone-5-propanoate is bound at residue Gln241. Asp313 is a Fe(3+) binding site. Residue Asp313 participates in Zn(2+) binding. 2 residues coordinate N-formimidoyl-L-glutamate: Asn315 and Gly317. Position 318 (Thr318) interacts with 4-imidazolone-5-propanoate.

The protein belongs to the metallo-dependent hydrolases superfamily. HutI family. Zn(2+) serves as cofactor. The cofactor is Fe(3+).

Its subcellular location is the cytoplasm. It catalyses the reaction 4-imidazolone-5-propanoate + H2O = N-formimidoyl-L-glutamate. It participates in amino-acid degradation; L-histidine degradation into L-glutamate; N-formimidoyl-L-glutamate from L-histidine: step 3/3. Its function is as follows. Catalyzes the hydrolytic cleavage of the carbon-nitrogen bond in imidazolone-5-propanoate to yield N-formimidoyl-L-glutamate. It is the third step in the universal histidine degradation pathway. This Burkholderia multivorans (strain ATCC 17616 / 249) protein is Imidazolonepropionase.